Reading from the N-terminus, the 536-residue chain is GMP synthase [glutamine-hydrolyzing] (536 aa).

In terms of domain architecture, Glutamine amidotransferase type-1 spans 19–212; that stretch reads RILILDFGSQ…VHEICDCAGS (194 aa). Cysteine 96 serves as the catalytic Nucleophile. Active-site residues include histidine 186 and glutamate 188. The region spanning 213–411 is the GMPS ATP-PPase domain; the sequence is WTPDNIIDMR…LGLPAKMINR (199 aa). 240–246 provides a ligand contact to ATP; that stretch reads SGGVDSS.

As to quaternary structure, homodimer.

It catalyses the reaction XMP + L-glutamine + ATP + H2O = GMP + L-glutamate + AMP + diphosphate + 2 H(+). The protein operates within purine metabolism; GMP biosynthesis; GMP from XMP (L-Gln route): step 1/1. In terms of biological role, catalyzes the synthesis of GMP from XMP. This is GMP synthase [glutamine-hydrolyzing] from Psychrobacter arcticus (strain DSM 17307 / VKM B-2377 / 273-4).